We begin with the raw amino-acid sequence, 528 residues long: Aurora kinase (528 aa).

2 disordered regions span residues 1–35 (MMLPRNSPHRTESTLAYNNNNSNNNNNNNGSSLFQ) and 48–235 (ISKP…KPQQ). 2 stretches are compositionally biased toward low complexity: residues 18–29 (NNNNSNNNNNNN) and 59–94 (HSHTFTTPTPKTRNTATTTTNNNNRNNHQYRNPNLN). Positions 95–104 (TSLVFTPTKN) are enriched in polar residues. Positions 105 to 120 (SSSSSSSHSSSLLSSS) are enriched in low complexity. The segment covering 129 to 155 (QPESNHTRATSHYRTTSTSQYKSSANK) has biased composition (polar residues). Positions 185–230 (TTTATQNTNNNKILNPSLSSSTIRFSTVSSSTSSSTTSSSSSSHTS) are enriched in low complexity. A Protein kinase domain is found at 242–515 (FEFGKILGKG…LKEVLNHNWI (274 aa)). Residues 248 to 256 (LGKGKLGRV) and K271 each bind ATP. D365 (proton acceptor) is an active-site residue.

The protein belongs to the protein kinase superfamily. Ser/Thr protein kinase family. Aurora subfamily.

The protein localises to the nucleus. The protein resides in the cytoplasm. Its subcellular location is the cytoskeleton. It localises to the spindle. It is found in the chromosome. The protein localises to the centromere. The protein resides in the kinetochore. It carries out the reaction L-seryl-[protein] + ATP = O-phospho-L-seryl-[protein] + ADP + H(+). It catalyses the reaction L-threonyl-[protein] + ATP = O-phospho-L-threonyl-[protein] + ADP + H(+). Its function is as follows. Component of the chromosomal passenger complex (CPC), a complex that acts as a key regulator of chromosome segregation and cytokinesis. Has a role in error-correction of aberrent kinetochore-microtubule attachments to ensure that sister kinetochores become bioriented and connect to opposite poles by promoting spindle assembly checkpoint signaling. In Candida albicans (strain SC5314 / ATCC MYA-2876) (Yeast), this protein is Aurora kinase (IPL1).